A 212-amino-acid polypeptide reads, in one-letter code: Ribonuclease HII (212 aa).

Residues 22–211 form the RNase H type-2 domain; sequence GLVAGVDEVG…VADRILLQNT (190 aa). A divalent metal cation contacts are provided by aspartate 28, glutamate 29, and aspartate 120.

This sequence belongs to the RNase HII family. The cofactor is Mn(2+). Mg(2+) serves as cofactor.

The protein localises to the cytoplasm. It catalyses the reaction Endonucleolytic cleavage to 5'-phosphomonoester.. Its function is as follows. Endonuclease that specifically degrades the RNA of RNA-DNA hybrids. This is Ribonuclease HII from Shewanella frigidimarina (strain NCIMB 400).